The sequence spans 138 residues: Ribosome maturation factor RimP (138 aa).

This sequence belongs to the RimP family.

The protein localises to the cytoplasm. Required for maturation of 30S ribosomal subunits. The chain is Ribosome maturation factor RimP from Campylobacter concisus (strain 13826).